Consider the following 147-residue polypeptide: Large ribosomal subunit protein bL9 (147 aa).

Belongs to the bacterial ribosomal protein bL9 family.

In terms of biological role, binds to the 23S rRNA. The sequence is that of Large ribosomal subunit protein bL9 from Shouchella clausii (strain KSM-K16) (Alkalihalobacillus clausii).